The chain runs to 272 residues: Ribosomal RNA small subunit methyltransferase A (272 aa).

S-adenosyl-L-methionine is bound by residues Asn18, Leu20, Gly45, Glu66, Asp91, and Asn113.

This sequence belongs to the class I-like SAM-binding methyltransferase superfamily. rRNA adenine N(6)-methyltransferase family. RsmA subfamily.

The protein resides in the cytoplasm. It carries out the reaction adenosine(1518)/adenosine(1519) in 16S rRNA + 4 S-adenosyl-L-methionine = N(6)-dimethyladenosine(1518)/N(6)-dimethyladenosine(1519) in 16S rRNA + 4 S-adenosyl-L-homocysteine + 4 H(+). Its function is as follows. Specifically dimethylates two adjacent adenosines (A1518 and A1519) in the loop of a conserved hairpin near the 3'-end of 16S rRNA in the 30S particle. May play a critical role in biogenesis of 30S subunits. This Yersinia pestis bv. Antiqua (strain Antiqua) protein is Ribosomal RNA small subunit methyltransferase A.